The following is a 613-amino-acid chain: Myrcene synthase, chloroplastic (613 aa).

The transit peptide at 1–46 (MQCMAVHQFAPLLSLLNCSRISSDFGRLFTPKTSTKSRSSTCHPIQ) directs the protein to the chloroplast. Residues Arg-324, Asp-361, and Asp-365 each coordinate (2E)-geranyl diphosphate. Mg(2+)-binding residues include Asp-361 and Asp-365. The short motif at 361–365 (DDIYD) is the DDXXD motif element. Residues 455-475 (IEMAWLSIGGPVILVHAYFCF) form a helical membrane-spanning segment. (2E)-geranyl diphosphate is bound by residues Arg-503 and Asp-506. Positions 506, 510, and 514 each coordinate Mg(2+).

This sequence belongs to the terpene synthase family. Tpsb subfamily. Mg(2+) is required as a cofactor. The cofactor is Mn(2+). In terms of tissue distribution, expressed in trichomes.

It localises to the plastid. The protein resides in the chloroplast membrane. It carries out the reaction (2E)-geranyl diphosphate = beta-myrcene + diphosphate. The protein operates within secondary metabolite biosynthesis; terpenoid biosynthesis. Its function is as follows. Monoterpene synthase that catalyzes the formation of myrcene. Can use geranyl diphosphate as substrate, but not farnesyl diphosphate or geranylgeranyl diphosphate. This Humulus lupulus (European hop) protein is Myrcene synthase, chloroplastic.